Reading from the N-terminus, the 314-residue chain is 2,3-dihydroxyphenylpropionate/2,3-dihydroxicinnamic acid 1,2-dioxygenase (314 aa).

Catalysis depends on His115, which acts as the Proton donor. His179 acts as the Proton acceptor in catalysis.

It belongs to the LigB/MhpB extradiol dioxygenase family. Homotetramer. The cofactor is Fe(2+).

It catalyses the reaction 3-(2,3-dihydroxyphenyl)propanoate + O2 = (2Z,4E)-2-hydroxy-6-oxonona-2,4-dienedioate + H(+). The catalysed reaction is (2E)-3-(2,3-dihydroxyphenyl)prop-2-enoate + O2 = (2Z,4E,7E)-2-hydroxy-6-oxonona-2,4,7-trienedioate + H(+). It participates in aromatic compound metabolism; 3-phenylpropanoate degradation. Catalyzes the non-heme iron(II)-dependent oxidative cleavage of 2,3-dihydroxyphenylpropionic acid and 2,3-dihydroxicinnamic acid into 2-hydroxy-6-ketononadienedioate and 2-hydroxy-6-ketononatrienedioate, respectively. The sequence is that of 2,3-dihydroxyphenylpropionate/2,3-dihydroxicinnamic acid 1,2-dioxygenase from Cupriavidus pinatubonensis (strain JMP 134 / LMG 1197) (Cupriavidus necator (strain JMP 134)).